The primary structure comprises 935 residues: MAPRAASPALSENEFDITGALFQNDSESDNERSSAKSKRQPKKKIPSQDLDFLGDVNDDDGDEAFIAQQQTSANRKASNLKGRTVKKGGGFQAMGLSANLLKAIARKGFSVPTPIQRKTIPVIMDDQDVVGMARTGSGKTAAFVIPMIEKLRSHSTKVGARGLILSPSRELALQTLKVVKELGKGTDLKCVLLVGGDSLEEQFTMMAGNPDIVIATPGRFLHLKVEMNLDLYSIRYVVFDEADRLFEMGFAAQLTEILHGLPPNRQTLLFSATLPKSLVEFARAGLQEPTLIRLDTESKISPDLQNAFFSIKSSEKEGALLYILHEVIKMPTGPTEMAQQRQGEDASARFSKANKRKRAEMEKAVNTKESPTQHSTIVFAATKHHVDYLYSLLHEAGFAVSYVYGALDQTARKIQVQNFRSGLSNILVVTDVAARGIDIPILANVINYDFPSQPKIFIHRVGRTARAGRKGWSYSLVRDADAPYLLDLQLFLGRRLVVGRENGDHVNFAEDVVAGGLPRDGLSQNCEWVTKVLGDDADIAAQRTVATKGEKLYMRTRNSASLESAKRAKQVVSSDHWTSIHPLFQDESSNLEAEREKMLARIGGYRPSETIFEVNTRRIGKQESEEALNTIKRVRTTLETKKKRSKANAKSEFLEDAPEGLKTGEGEAGKNEDEAAFSDADDIDAPTGVADDMSLASDSELEVTFSSYSQSNGNKSKKASAASFQNPDYFMSYTPNNNSLAEDRAYGVHSGTNSNFAQASRSATMDLAGDEGSRGFGEPRTMMRWDKRHKKYVARQNDEDGSKGTRLVRGESGAKIASSFRSGRFDAWKRGNRVGRMPRVGEAEAPNLAAGLNAALSGKRFKHRREQAPKRADPLRGDYEKMKKKADKAKERSMSKAGGAAAGGKSELRNTDDIRIARKLKQRRQEKNARPSRKR.

A disordered region spans residues 1–51 (MAPRAASPALSENEFDITGALFQNDSESDNERSSAKSKRQPKKKIPSQDLD). Positions 35-45 (AKSKRQPKKKI) are enriched in basic residues. The Q motif motif lies at 89 to 117 (GGFQAMGLSANLLKAIARKGFSVPTPIQR). One can recognise a Helicase ATP-binding domain in the interval 120-292 (IPVIMDDQDV…RAGLQEPTLI (173 aa)). 133–140 (ARTGSGKT) serves as a coordination point for ATP. The short motif at 240-243 (DEAD) is the DEAD box element. Residues 360-514 (EMEKAVNTKE…HVNFAEDVVA (155 aa)) form the Helicase C-terminal domain. Disordered regions lie at residues 638–674 (LETK…NEDE) and 857–935 (SGKR…SRKR). Composition is skewed to basic and acidic residues over residues 662 to 673 (KTGEGEAGKNED), 866 to 881 (EQAP…DYEK), and 906 to 916 (SELRNTDDIRI).

It belongs to the DEAD box helicase family. DDX54/DBP10 subfamily.

It localises to the nucleus. It is found in the nucleolus. The catalysed reaction is ATP + H2O = ADP + phosphate + H(+). Functionally, ATP-binding RNA helicase involved in the biogenesis of 60S ribosomal subunits and is required for the normal formation of 25S and 5.8S rRNAs. This is ATP-dependent RNA helicase dbp10 (dbp10) from Aspergillus clavatus (strain ATCC 1007 / CBS 513.65 / DSM 816 / NCTC 3887 / NRRL 1 / QM 1276 / 107).